The sequence spans 490 residues: ATP synthase subunit beta, chloroplastic (490 aa).

170 to 177 is an ATP binding site; that stretch reads GGAGVGKT.

Belongs to the ATPase alpha/beta chains family. In terms of assembly, F-type ATPases have 2 components, CF(1) - the catalytic core - and CF(0) - the membrane proton channel. CF(1) has five subunits: alpha(3), beta(3), gamma(1), delta(1), epsilon(1). CF(0) has four main subunits: a(1), b(1), b'(1) and c(9-12).

Its subcellular location is the plastid. The protein localises to the chloroplast thylakoid membrane. It carries out the reaction ATP + H2O + 4 H(+)(in) = ADP + phosphate + 5 H(+)(out). In terms of biological role, produces ATP from ADP in the presence of a proton gradient across the membrane. The catalytic sites are hosted primarily by the beta subunits. This chain is ATP synthase subunit beta, chloroplastic, found in Calystegia sepium (Hedge bindweed).